A 275-amino-acid polypeptide reads, in one-letter code: Ribosomal RNA small subunit methyltransferase A (275 aa).

6 residues coordinate S-adenosyl-L-methionine: Asn21, Leu23, Gly48, Glu69, Asp94, and Asn115.

The protein belongs to the class I-like SAM-binding methyltransferase superfamily. rRNA adenine N(6)-methyltransferase family. RsmA subfamily.

It localises to the cytoplasm. The enzyme catalyses adenosine(1518)/adenosine(1519) in 16S rRNA + 4 S-adenosyl-L-methionine = N(6)-dimethyladenosine(1518)/N(6)-dimethyladenosine(1519) in 16S rRNA + 4 S-adenosyl-L-homocysteine + 4 H(+). Functionally, specifically dimethylates two adjacent adenosines (A1518 and A1519) in the loop of a conserved hairpin near the 3'-end of 16S rRNA in the 30S particle. May play a critical role in biogenesis of 30S subunits. This chain is Ribosomal RNA small subunit methyltransferase A, found in Clostridium botulinum (strain Langeland / NCTC 10281 / Type F).